The chain runs to 86 residues: Small ribosomal subunit protein uS15 (86 aa).

This sequence belongs to the universal ribosomal protein uS15 family. Part of the 30S ribosomal subunit. Forms a bridge to the 50S subunit in the 70S ribosome, contacting the 23S rRNA.

Its function is as follows. One of the primary rRNA binding proteins, it binds directly to 16S rRNA where it helps nucleate assembly of the platform of the 30S subunit by binding and bridging several RNA helices of the 16S rRNA. Forms an intersubunit bridge (bridge B4) with the 23S rRNA of the 50S subunit in the ribosome. In Vesicomyosocius okutanii subsp. Calyptogena okutanii (strain HA), this protein is Small ribosomal subunit protein uS15.